Reading from the N-terminus, the 26-residue chain is Toxin TdII-1 (26 aa).

This sequence belongs to the long (4 C-C) scorpion toxin superfamily. Sodium channel inhibitor family. Beta subfamily. Expressed by the venom gland.

It localises to the secreted. Its function is as follows. Beta toxins bind voltage-independently at site-4 of sodium channels (Nav) and shift the voltage of activation toward more negative potentials thereby affecting sodium channel activation and promoting spontaneous and repetitive firing. This toxin is active against mammals and crustaceans. This is Toxin TdII-1 from Tityus discrepans (Venezuelan scorpion).